The chain runs to 454 residues: Protein translocase subunit SecY (454 aa).

Helical transmembrane passes span 43-63 (LTIALLVFIIKIGMAIPLPYI), 97-117 (FTLGITPSINASIILQLAFVI), 144-164 (TLLLAITQSVFLIFSLRAFIF), 168-188 (ILKLFELSCVLSSGAMIILWI), 201-221 (SSFLIFLNIVSVLPEQIGMSF), 226-246 (IFSFEGLIVILTFSITVWAAI), 289-309 (PVVFASYLIPILKTGGIYILL), 334-354 (IVEAGLICLFALFYSGLIIDP), 390-410 (LIGALILAFNVVLLNLVGFVF), and 414-434 (IFKGFSIGSQIILLGVVTEIL).

It belongs to the SecY/SEC61-alpha family. In terms of assembly, component of the plastid Sec protein translocase complex, which is composed of at least SecY and SecE.

The protein localises to the plastid. It is found in the chloroplast thylakoid membrane. The central subunit of the protein translocation channel SecYE. Consists of two halves formed by TMs 1-5 and 6-10. These two domains form a lateral gate at the front which open onto the bilayer between TMs 2 and 7, and are clamped together by SecE at the back. The channel is closed by both a pore ring composed of hydrophobic SecY resides and a short helix (helix 2A) on the extracellular side of the membrane which forms a plug. This chain is Protein translocase subunit SecY, found in Heterosigma akashiwo (strain NIES-293 / 8280G21-1).